Consider the following 375-residue polypeptide: Neuropeptide Y receptor type 4 (375 aa).

Topologically, residues 1 to 39 (MNTSHFLAPLFPGSLQGKNGTNPLDSPYNFSDGCQDSAE) are extracellular. N-linked (GlcNAc...) asparagine glycosylation is found at Asn2, Asn19, and Asn29. A helical transmembrane segment spans residues 40–60 (LLAFIITTYSIETILGVLGNL). Residues 61 to 78 (CLIFVTTRQKEKSNVTNL) lie on the Cytoplasmic side of the membrane. A helical transmembrane segment spans residues 79–99 (LIANLAFSDFLMCLICQPLTV). Over 100–116 (TYTIMDYWIFGEVLCKM) the chain is Extracellular. Cysteines 114 and 201 form a disulfide. A helical transmembrane segment spans residues 117 to 137 (LTFIQCMSVTVSILSLVLVAL). The Cytoplasmic portion of the chain corresponds to 138–155 (ERHQLIINPTGWKPSIFQ). Residues 156–176 (AYLGIVVIWFVSCFLSLPFLA) form a helical membrane-spanning segment. Topologically, residues 177 to 211 (NSTLNDLFHYNHSKVVEFLEDKVVCFVSWSSDHHR) are extracellular. The N-linked (GlcNAc...) asparagine glycan is linked to Asn187. Residues 212 to 232 (LIYTTFLLLFQYCIPLAFILV) form a helical membrane-spanning segment. Residues 233-266 (CYIRIYQRLQRQKHVFHAHACSSRAGQMKRINSM) are Cytoplasmic-facing. Residues 267-287 (LMTMVTAFAVLWLPLHVFNTL) traverse the membrane as a helical segment. Residues 288–301 (EDWYQEAIPACHGN) lie on the Extracellular side of the membrane. A helical transmembrane segment spans residues 302-322 (LIFLMCHLLAMASTCVNPFIY). The Cytoplasmic portion of the chain corresponds to 323–375 (GFLNINFKKDIKALVLTCHCRSPRGESEHLPLSTVHTDLSKGSMRMGSKSNFI). The S-palmitoyl cysteine moiety is linked to residue Cys340.

The protein belongs to the G-protein coupled receptor 1 family. In terms of tissue distribution, heart, detected in small intestine.

It is found in the cell membrane. Functionally, g protein-coupled receptor for PPY/pancreatic polypeptide/PP that is negatively coupled to cAMP. Has much lower affinity for the NPY/neuropeptide Y and PYY/peptide YY. The sequence is that of Neuropeptide Y receptor type 4 (Npy4r) from Mus musculus (Mouse).